Here is a 127-residue protein sequence, read N- to C-terminus: Large ribosomal subunit protein bL17 (127 aa).

The protein belongs to the bacterial ribosomal protein bL17 family. Part of the 50S ribosomal subunit. Contacts protein L32.

This chain is Large ribosomal subunit protein bL17, found in Ligilactobacillus salivarius (strain UCC118) (Lactobacillus salivarius).